Consider the following 386-residue polypeptide: Probable protein phosphatase 2C 36 (386 aa).

In terms of domain architecture, PPM-type phosphatase spans Glu60–Ile363. The Mn(2+) site is built by Asp94, Gly95, Asp295, and Asp354.

It belongs to the PP2C family. Mg(2+) serves as cofactor. The cofactor is Mn(2+).

It catalyses the reaction O-phospho-L-seryl-[protein] + H2O = L-seryl-[protein] + phosphate. The catalysed reaction is O-phospho-L-threonyl-[protein] + H2O = L-threonyl-[protein] + phosphate. This chain is Probable protein phosphatase 2C 36, found in Oryza sativa subsp. japonica (Rice).